Reading from the N-terminus, the 250-residue chain is 26 kDa periplasmic immunogenic protein (250 aa).

An N-terminal signal peptide occupies residues 1-28 (MNTRASNFLAASFSTIMLVGAFSLPAFA).

Its subcellular location is the periplasm. This Brucella abortus (strain S19) protein is 26 kDa periplasmic immunogenic protein (bp26).